We begin with the raw amino-acid sequence, 361 residues long: Divinyl chlorophyll a/b light-harvesting protein PcbE (361 aa).

The next 6 helical transmembrane spans lie at 27 to 47 (FIGSHVAHTGLIAFTAGANTL), 88 to 108 (VAFVGIFHLICSFVYALAGLL), 149 to 169 (FILGHHLVFFGVANIWFVEWA), 210 to 230 (VMGGHAFLAFFQIGGGAFHIA), 250 to 270 (AVLSWSLAGIGWMAIIAAFWC), and 315 to 335 (LSNVHYYLGFFFIQGHLWHAI).

It belongs to the PsbB/PsbC family. IsiA/Pcb subfamily. As to quaternary structure, the antenna complex consists of divinyl chlorophylls (a and b) and divinyl chlorophyll a/b binding proteins and binds more divinyl chlorophyll b than does the antenna complex from high-light-adapted Prochlorococcus. It depends on divinyl chlorophyll a as a cofactor. Requires divinyl chlorophyll b as cofactor.

The protein resides in the cellular thylakoid membrane. Functionally, the antenna complex functions as a light receptor, it captures and delivers excitation energy to photosystems II and I. The Prochlorales pcb genes are not related to higher plant LHCs. This is Divinyl chlorophyll a/b light-harvesting protein PcbE (pcbE) from Prochlorococcus marinus (strain SARG / CCMP1375 / SS120).